The sequence spans 219 residues: Vesicle-associated membrane protein 721 (219 aa).

The Cytoplasmic portion of the chain corresponds to M1 to L196. The region spanning F10–L114 is the Longin domain. One can recognise a v-SNARE coiled-coil homology domain in the interval K130–Q190. The helical; Anchor for type IV membrane protein transmembrane segment at I197–F217 threads the bilayer. Topologically, residues K218–C219 are vesicular.

Belongs to the synaptobrevin family. As to expression, expressed in flowers, leaves, stems and roots.

The protein localises to the cell membrane. It is found in the early endosome membrane. In terms of biological role, involved in the targeting and/or fusion of transport vesicles to their target membrane. This is Vesicle-associated membrane protein 721 from Arabidopsis thaliana (Mouse-ear cress).